Reading from the N-terminus, the 72-residue chain is Mu-like prophage FluMu protein C (72 aa).

A DNA-binding region (H-T-H motif) is located at residues 35–55 (NVPDLIKKYRLSESTIYAILR).

It belongs to the c/mor transcriptional regulatory family.

Its function is as follows. Required for transcription of the phage late genes. This is Mu-like prophage FluMu protein C from Haemophilus influenzae (strain ATCC 51907 / DSM 11121 / KW20 / Rd).